The primary structure comprises 575 residues: Probable ferredoxin/ferredoxin--NADP reductase (575 aa).

4Fe-4S ferredoxin-type domains are found at residues 2–29 (PHVITQSCCNDASCVFACPVNCIHPTPD) and 37–66 (EMLYIDPVACVDCGACVTACPVSAIAPNTR). Residues C9, C15, C19, C46, C49, C52, and C56 each contribute to the [4Fe-4S] cluster site. The interval 115-575 (VAVVGSGPAA…GQPIVLTVPL (461 aa)) is ferredoxin--NADP reductase. FAD is bound by residues A123, E143, L151, and I187. NADP(+) is bound by residues R213, 258-261 (NGNV), 302-303 (RR), and E314. FAD is bound by residues W456 and 463–465 (GFI). G463 lines the NADP(+) pocket.

In the C-terminal section; belongs to the ferredoxin--NADP reductase family. It depends on [4Fe-4S] cluster as a cofactor. FAD is required as a cofactor.

It carries out the reaction 2 reduced [2Fe-2S]-[ferredoxin] + NADP(+) + H(+) = 2 oxidized [2Fe-2S]-[ferredoxin] + NADPH. This Mycobacterium bovis (strain ATCC BAA-935 / AF2122/97) protein is Probable ferredoxin/ferredoxin--NADP reductase (fprB).